A 221-amino-acid polypeptide reads, in one-letter code: Riboflavin kinase (221 aa).

The interval 1–89 (MENIYIALKT…ISSILRFSQE (89 aa)) is H-T-H motif-like. Residues 90-221 (LKLVGAVQDG…EVLASIDGKL (132 aa)) form a riboflavin kinase region. 99 to 104 (GLGEGK) provides a ligand contact to CDP. Residues Thr-128 and Asn-130 each coordinate Mg(2+). Residues Ser-185 and Glu-192 each contribute to the FMN site. 197 to 200 (KYLR) provides a ligand contact to CDP.

The protein belongs to the archaeal riboflavin kinase family. Requires Mg(2+) as cofactor.

It catalyses the reaction riboflavin + CTP = CDP + FMN + H(+). It participates in cofactor biosynthesis; FMN biosynthesis; FMN from riboflavin (CTP route): step 1/1. Functionally, catalyzes the CTP-dependent phosphorylation of riboflavin (vitamin B2) to form flavin mononucleotide (FMN). In Picrophilus torridus (strain ATCC 700027 / DSM 9790 / JCM 10055 / NBRC 100828 / KAW 2/3), this protein is Riboflavin kinase (ribK).